The primary structure comprises 683 residues: Eukaryotic translation initiation factor 3 subunit B (683 aa).

Positions 1–25 (MAKKKGEEQDFEEEPNFDDPEGFVD) are disordered. The span at 9-25 (QDFEEEPNFDDPEGFVD) shows a compositional bias: acidic residues. Residues 49-133 (NVIVVDNIPV…YTLLVNRFAD (85 aa)) enclose the RRM domain. WD repeat units lie at residues 199–238 (KRER…KVNK), 240–279 (AHSN…EKRT), 283–321 (DGMS…LLDM), 324–359 (IRVE…TLMA), 435–477 (EVKE…EPVL), and 522–567 (GDHY…KRVN). Residues 611–638 (MTRASKELIEKRAKLREQFTEYRSKRVK) are a coiled coil.

The protein belongs to the eIF-3 subunit B family. As to quaternary structure, component of the eukaryotic translation initiation factor 3 (eIF-3) complex.

The protein localises to the cytoplasm. Functionally, RNA-binding component of the eukaryotic translation initiation factor 3 (eIF-3) complex, which is involved in protein synthesis of a specialized repertoire of mRNAs and, together with other initiation factors, stimulates binding of mRNA and methionyl-tRNAi to the 40S ribosome. The eIF-3 complex specifically targets and initiates translation of a subset of mRNAs involved in cell proliferation. The protein is Eukaryotic translation initiation factor 3 subunit B of Anopheles gambiae (African malaria mosquito).